We begin with the raw amino-acid sequence, 769 residues long: Phosphatidylinositol 4-phosphate 5-kinase 8 (769 aa).

MORN repeat units follow at residues 16–38, 39–61, 62–84, 85–107, 108–130, 131–153, 154–176, and 177–198; these read YSGQ…DGII, YEGD…SGAK, YEGD…DGSV, YAGA…NSDV, YDGS…NGNR, FIGN…NGDL, FNGF…DGGF, and YFGT…AGSK. Residues 266-289 are disordered; sequence PPRDFMHHGPSSKSARSVDSGQSE. A compositionally biased stretch (polar residues) spans 276–288; that stretch reads SSKSARSVDSGQS. The PIPK domain occupies 344–765; it reads WNHYLMLNLQ…RFIDFLLKVF (422 aa). The tract at residues 725 to 746 is activation loop; sequence YNMKKKVEHTCKSMKYDPMTIS.

It carries out the reaction a 1,2-diacyl-sn-glycero-3-phospho-(1D-myo-inositol 4-phosphate) + ATP = a 1,2-diacyl-sn-glycero-3-phospho-(1D-myo-inositol-4,5-bisphosphate) + ADP + H(+). The polypeptide is Phosphatidylinositol 4-phosphate 5-kinase 8 (PIP5K8) (Arabidopsis thaliana (Mouse-ear cress)).